A 103-amino-acid polypeptide reads, in one-letter code: MSRILKSLSRSYSTTSPRLYVDVVQGLYISSLKSYKPKAVPSETAAEVKEWSMPSAPTAPKYDVDFTSALNSYKYEGETIPTKAAGESNKFDFLESYENEKEH.

Residues 1-26 (MSRILKSLSRSYSTTSPRLYVDVVQG) constitute a mitochondrion transit peptide.

Belongs to the ATPase h subunit family. F-type ATPases have 2 components, CF(1) - the catalytic core - and CF(0) - the membrane proton channel.

The protein resides in the mitochondrion. Its subcellular location is the mitochondrion inner membrane. Functionally, mitochondrial membrane ATP synthase (F(1)F(0) ATP synthase or Complex V) produces ATP from ADP in the presence of a proton gradient across the membrane which is generated by electron transport complexes of the respiratory chain. F-type ATPases consist of two structural domains, F(1) - containing the extramembraneous catalytic core and F(0) - containing the membrane proton channel, linked together by a central stalk and a peripheral stalk. During catalysis, ATP synthesis in the catalytic domain of F(1) is coupled via a rotary mechanism of the central stalk subunits to proton translocation. Part of the complex F(0) domain. Minor subunit located with subunit a in the membrane. This is ATP synthase subunit H, mitochondrial (atp14) from Schizosaccharomyces pombe (strain 972 / ATCC 24843) (Fission yeast).